The following is a 233-amino-acid chain: Nuclear speckle RNA-binding protein A (233 aa).

Disordered regions lie at residues 1–54, 68–92, and 214–233; these read MADG…VPDT, VQSG…GGNV, and FLRL…RGRR. A compositionally biased stretch (gly residues) spans 71-91; that stretch reads GEGGSVSMGRSGGGGGGGGGN. One can recognise an RRM domain in the interval 136–222; that stretch reads NTLYVEGLPS…KFLRLQFSRK (87 aa).

Expressed in root meristems, lateral root primordia and root vascular tissues.

The protein localises to the nucleus speckle. Alternative splicing (AS) regulator that binds to specific mRNAs and modulates auxin effects on the transcriptome. Displaced from its targets upon binding to AS competitor long non-coding RNA (ASCO-RNA). The polypeptide is Nuclear speckle RNA-binding protein A (Arabidopsis thaliana (Mouse-ear cress)).